The primary structure comprises 373 residues: Zinc finger protein CONSTANS-LIKE 10 (373 aa).

Zn(2+)-binding residues include C5, C8, C28, H33, C48, C51, C71, and H76. The B box-type 1; atypical zinc-finger motif lies at 5–47 (CDFCGEQRSMVYCRSDAACLCLSCDRNVHSANALSKRHSRTLV). A B box-type 2; atypical zinc finger spans residues 48–92 (CERCNAQPASVRCSDERVSLCQNCDWSGHDGKNSTTTSHHKRQTI). Residues 152-172 (PETSSAAQGMDHSSVPENSSM) form a disordered region. Residues 316–358 (RNNAVMRYKEKKKARKFDKRVRYVSRKERADVRRRVKGRFVKS) form the CCT domain.

Belongs to the CONSTANS family.

It localises to the nucleus. The polypeptide is Zinc finger protein CONSTANS-LIKE 10 (COL10) (Arabidopsis thaliana (Mouse-ear cress)).